We begin with the raw amino-acid sequence, 588 residues long: Glutamyl-tRNA(Gln) amidotransferase subunit B, mitochondrial (588 aa).

A mitochondrion-targeting transit peptide spans 1 to 109; that stretch reads MLRSWIGSGT…RAPTSTSETP (109 aa). Over residues 22–35 the composition is skewed to low complexity; sequence SSLPSPKASFSSAP. The disordered stretch occupies residues 22–50; it reads SSLPSPKASFSSAPNRYLQPPTSADRVPL.

It belongs to the GatB/GatE family. GatB subfamily. In terms of assembly, subunit of the heterotrimeric GatCAB amidotransferase (AdT) complex, composed of A, B and C subunits.

The protein localises to the mitochondrion. It catalyses the reaction L-glutamyl-tRNA(Gln) + L-glutamine + ATP + H2O = L-glutaminyl-tRNA(Gln) + L-glutamate + ADP + phosphate + H(+). Its function is as follows. Allows the formation of correctly charged Gln-tRNA(Gln) through the transamidation of misacylated Glu-tRNA(Gln) in the mitochondria. The reaction takes place in the presence of glutamine and ATP through an activated gamma-phospho-Glu-tRNA(Gln). This Penicillium rubens (strain ATCC 28089 / DSM 1075 / NRRL 1951 / Wisconsin 54-1255) (Penicillium chrysogenum) protein is Glutamyl-tRNA(Gln) amidotransferase subunit B, mitochondrial.